Consider the following 304-residue polypeptide: Glutaminase (304 aa).

Serine 63, asparagine 114, glutamate 158, asparagine 165, tyrosine 189, tyrosine 240, and valine 258 together coordinate substrate.

The protein belongs to the glutaminase family. As to quaternary structure, homotetramer.

It catalyses the reaction L-glutamine + H2O = L-glutamate + NH4(+). This Shewanella baltica (strain OS155 / ATCC BAA-1091) protein is Glutaminase.